The primary structure comprises 410 residues: MAREKFERVKPHVNIGTIGHVDHGKTTLTAAITMALASVSGKKGKKYDDIDSAPEEKARGITINTAHVEYETETRHYAHVDCPGHADYVKNMITGAAQMDGAILVVSGADGPMPQTKEHLLLAKQVGVPSIVVFLNKEDQVDDEELLELVELEIREMLDTYDFPGDSTPIIKGSALMALQALMETDEMSRGSNPWVDKILTLMDNVDEYIPTPERETDKPFLMAVEDVFSITGRGTVATGRVERGGVKIGDVVEIVGLRETRSTTVTGLEMFQKMLQESIAGDNVGMLLRGIQKADIQRGMVVAQPGSITPHVSFDAQVYILTKEEGGRHTPFFKGYRPQFYVRTTDVTGKIESLKSDEDNTEMRMVVPGDRVTMSVELVQPIAIEKGMRFAIREGGRTVGAGVVSNVVS.

Residues 10–214 (KPHVNIGTIG…NVDEYIPTPE (205 aa)) enclose the tr-type G domain. Residues 19 to 26 (GHVDHGKT) form a G1 region. Position 19–26 (19–26 (GHVDHGKT)) interacts with GTP. Mg(2+) is bound at residue Thr26. Residues 60 to 64 (GITIN) form a G2 region. A G3 region spans residues 81–84 (DCPG). GTP-binding positions include 81–85 (DCPGH) and 136–139 (NKED). Positions 136-139 (NKED) are G4. The tract at residues 174 to 176 (SAL) is G5.

Belongs to the TRAFAC class translation factor GTPase superfamily. Classic translation factor GTPase family. EF-Tu/EF-1A subfamily.

It localises to the plastid. The protein localises to the chloroplast stroma. It catalyses the reaction GTP + H2O = GDP + phosphate + H(+). Functionally, GTP hydrolase that promotes the GTP-dependent binding of aminoacyl-tRNA to the A-site of ribosomes during protein biosynthesis. This chain is Elongation factor Tu, chloroplastic (tufA), found in Bigelowiella natans (Pedinomonas minutissima).